A 355-amino-acid polypeptide reads, in one-letter code: 3-isopropylmalate dehydrogenase (355 aa).

Positions 90, 100, 128, and 222 each coordinate substrate. Mg(2+) contacts are provided by aspartate 222, aspartate 246, and aspartate 250. 280–292 is an NAD(+) binding site; it reads GSAPDIAGKGVAN.

It belongs to the isocitrate and isopropylmalate dehydrogenases family. LeuB type 1 subfamily. In terms of assembly, homodimer. Requires Mg(2+) as cofactor. It depends on Mn(2+) as a cofactor.

The protein resides in the cytoplasm. The catalysed reaction is (2R,3S)-3-isopropylmalate + NAD(+) = 4-methyl-2-oxopentanoate + CO2 + NADH. It participates in amino-acid biosynthesis; L-leucine biosynthesis; L-leucine from 3-methyl-2-oxobutanoate: step 3/4. In terms of biological role, catalyzes the oxidation of 3-carboxy-2-hydroxy-4-methylpentanoate (3-isopropylmalate) to 3-carboxy-4-methyl-2-oxopentanoate. The product decarboxylates to 4-methyl-2 oxopentanoate. This chain is 3-isopropylmalate dehydrogenase, found in Cupriavidus metallidurans (strain ATCC 43123 / DSM 2839 / NBRC 102507 / CH34) (Ralstonia metallidurans).